Here is a 989-residue protein sequence, read N- to C-terminus: SWI/SNF-related matrix-associated actin-dependent regulator of chromatin subfamily A containing DEAD/H box 1 homolog (989 aa).

The tract at residues 1 to 288 is disordered; sequence MSTTSDFQTG…RRAKRGETKN (288 aa). Over residues 72–105 the composition is skewed to acidic residues; it reads DDDDEDYVDETMPSEDEEDFDNNEEDEDDDDYEE. Over residues 109–120 the composition is skewed to basic residues; it reads RKRKAPSKKKLV. Over residues 124–140 the composition is skewed to basic and acidic residues; sequence ENYRREDSETPEPEMKR. Over residues 187–200 the composition is skewed to acidic residues; sequence DDESEDDFINDEEI. Composition is skewed to basic and acidic residues over residues 201-221 and 241-250; these read SEKG…GKDS and AQKEQKKKAE. Residues 251-276 show a composition bias toward acidic residues; that stretch reads SDEDWEEDEDDMNADGDETPSDDSDI. A compositionally biased stretch (basic and acidic residues) spans 277 to 288; it reads EERRAKRGETKN. In terms of domain architecture, Helicase ATP-binding spans 406 to 574; it reads IMMYNKDLNA…ISLMYFVLSK (169 aa). 419 to 426 serves as a coordination point for ATP; it reads DEMGLGKT. Residues 525 to 528 carry the DEGH box motif; that stretch reads DEGH. Residues 757–912 enclose the Helicase C-terminal domain; sequence QLDVMLPEIQ…GVKGQLDEDA (156 aa). Residues 941 to 989 form a disordered region; that stretch reads RYDDVEDDSGDSKNGIDAEEAAKKEDEAVKEPVEKEQQKEEESQPSTSA. Over residues 950–982 the composition is skewed to basic and acidic residues; sequence GDSKNGIDAEEAAKKEDEAVKEPVEKEQQKEEE.

Belongs to the SNF2/RAD54 helicase family.

It localises to the nucleus. Its subcellular location is the chromosome. The enzyme catalyses ATP + H2O = ADP + phosphate + H(+). Functionally, DNA helicase that possesses intrinsic ATP-dependent nucleosome-remodeling activity and is both required for DNA repair and heterochromatin organization. Promotes DNA end resection of double-strand breaks (DSBs) following DNA damage: probably acts by weakening histone DNA interactions in nucleosomes flanking DSBs. This Caenorhabditis elegans protein is SWI/SNF-related matrix-associated actin-dependent regulator of chromatin subfamily A containing DEAD/H box 1 homolog.